The following is a 215-amino-acid chain: Large ribosomal subunit protein bL25 (215 aa).

Residues 174–215 (ETVVTVQPPATEKEEETEAAVTDSEPEVINEKEEPAEEAKEE) form a disordered region. Positions 186 to 215 (KEEETEAAVTDSEPEVINEKEEPAEEAKEE) are enriched in acidic residues.

Belongs to the bacterial ribosomal protein bL25 family. CTC subfamily. In terms of assembly, part of the 50S ribosomal subunit; part of the 5S rRNA/L5/L18/L25 subcomplex. Contacts the 5S rRNA. Binds to the 5S rRNA independently of L5 and L18.

Its function is as follows. This is one of the proteins that binds to the 5S RNA in the ribosome where it forms part of the central protuberance. In Halalkalibacterium halodurans (strain ATCC BAA-125 / DSM 18197 / FERM 7344 / JCM 9153 / C-125) (Bacillus halodurans), this protein is Large ribosomal subunit protein bL25.